Consider the following 458-residue polypeptide: Bifunctional protein GlmU (458 aa).

The pyrophosphorylase stretch occupies residues 1–229 (MTNYAIILAA…FNESLGVNDR (229 aa)). UDP-N-acetyl-alpha-D-glucosamine-binding positions include 8–11 (LAAG), lysine 22, glutamine 72, and 77–78 (GT). Mg(2+) is bound at residue aspartate 102. UDP-N-acetyl-alpha-D-glucosamine-binding residues include glycine 139, glutamate 154, asparagine 169, and asparagine 227. A Mg(2+)-binding site is contributed by asparagine 227. The linker stretch occupies residues 230 to 250 (VALATAESVMRRRINKAHMIN). An N-acetyltransferase region spans residues 251-458 (GVTFQNPDAT…AKRLPHYPQK (208 aa)). Residues arginine 332 and lysine 350 each contribute to the UDP-N-acetyl-alpha-D-glucosamine site. The active-site Proton acceptor is histidine 362. UDP-N-acetyl-alpha-D-glucosamine is bound by residues tyrosine 365 and asparagine 376. Acetyl-CoA is bound by residues alanine 379, 385–386 (NY), serine 404, alanine 422, and arginine 439.

The protein in the N-terminal section; belongs to the N-acetylglucosamine-1-phosphate uridyltransferase family. In the C-terminal section; belongs to the transferase hexapeptide repeat family. As to quaternary structure, homotrimer. Requires Mg(2+) as cofactor.

Its subcellular location is the cytoplasm. It catalyses the reaction alpha-D-glucosamine 1-phosphate + acetyl-CoA = N-acetyl-alpha-D-glucosamine 1-phosphate + CoA + H(+). It carries out the reaction N-acetyl-alpha-D-glucosamine 1-phosphate + UTP + H(+) = UDP-N-acetyl-alpha-D-glucosamine + diphosphate. It participates in nucleotide-sugar biosynthesis; UDP-N-acetyl-alpha-D-glucosamine biosynthesis; N-acetyl-alpha-D-glucosamine 1-phosphate from alpha-D-glucosamine 6-phosphate (route II): step 2/2. Its pathway is nucleotide-sugar biosynthesis; UDP-N-acetyl-alpha-D-glucosamine biosynthesis; UDP-N-acetyl-alpha-D-glucosamine from N-acetyl-alpha-D-glucosamine 1-phosphate: step 1/1. It functions in the pathway bacterial outer membrane biogenesis; LPS lipid A biosynthesis. Catalyzes the last two sequential reactions in the de novo biosynthetic pathway for UDP-N-acetylglucosamine (UDP-GlcNAc). The C-terminal domain catalyzes the transfer of acetyl group from acetyl coenzyme A to glucosamine-1-phosphate (GlcN-1-P) to produce N-acetylglucosamine-1-phosphate (GlcNAc-1-P), which is converted into UDP-GlcNAc by the transfer of uridine 5-monophosphate (from uridine 5-triphosphate), a reaction catalyzed by the N-terminal domain. The polypeptide is Bifunctional protein GlmU (Streptococcus uberis (strain ATCC BAA-854 / 0140J)).